The primary structure comprises 398 residues: Cytochrome b (398 aa).

A helical membrane pass occupies residues 45-65 (LGSIAGIALVIQIITGVILAM). Heme b is bound by residues H95 and H109. The next 8 membrane-spanning stretches (helical) occupy residues 97–117 (VGAS…LYYG), 129–149 (IGII…VLPW), 164–184 (FSAI…GFSV), 192–212 (FFSL…LHLL), 245–265 (FVGF…EPNY), 304–324 (LAGV…PWLD), 335–355 (PIYR…GYLG), and 364–384 (IIIS…VLPL). Residues H196 and H210 each coordinate heme b.

The protein belongs to the cytochrome b family. As to quaternary structure, the main subunits of complex b-c1 are: cytochrome b, cytochrome c1 and the Rieske protein. Heme b serves as cofactor.

It localises to the cell membrane. Functionally, component of the ubiquinol-cytochrome c reductase complex (complex III or cytochrome b-c1 complex), which is a respiratory chain that generates an electrochemical potential coupled to ATP synthesis. This chain is Cytochrome b (petB), found in Rickettsia typhi (strain ATCC VR-144 / Wilmington).